The sequence spans 117 residues: Glycine cleavage system H-like protein (117 aa).

The Lipoyl-binding domain occupies 21–103 (IVKLGLSSQM…ESEGWFVVLQ (83 aa)). The residue at position 62 (Lys-62) is an N6-lipoyllysine.

The protein belongs to the GcvH family. Requires (R)-lipoate as cofactor.

The sequence is that of Glycine cleavage system H-like protein from Chlamydia trachomatis serovar L2 (strain ATCC VR-902B / DSM 19102 / 434/Bu).